A 295-amino-acid chain; its full sequence is Tyrosine recombinase XerC (295 aa).

The Core-binding (CB) domain maps to 1–84 (MTLEEQFLSY…SLKSFYRFLT (84 aa)). The Tyr recombinase domain maps to 105 to 289 (KLPEFFYQDE…SMQHLTVEYR (185 aa)). Catalysis depends on residues Arg-145, Lys-169, His-241, Arg-244, and His-267. Tyr-276 serves as the catalytic O-(3'-phospho-DNA)-tyrosine intermediate.

Belongs to the 'phage' integrase family. XerC subfamily. In terms of assembly, forms a cyclic heterotetrameric complex composed of two molecules of XerC and two molecules of XerD.

It localises to the cytoplasm. In terms of biological role, site-specific tyrosine recombinase, which acts by catalyzing the cutting and rejoining of the recombining DNA molecules. The XerC-XerD complex is essential to convert dimers of the bacterial chromosome into monomers to permit their segregation at cell division. It also contributes to the segregational stability of plasmids. The polypeptide is Tyrosine recombinase XerC (Lactobacillus delbrueckii subsp. bulgaricus (strain ATCC 11842 / DSM 20081 / BCRC 10696 / JCM 1002 / NBRC 13953 / NCIMB 11778 / NCTC 12712 / WDCM 00102 / Lb 14)).